The following is a 317-amino-acid chain: Zinc metalloproteinase/disintegrin (317 aa).

A propeptide spanning residues 1–26 is cleaved from the precursor; sequence EAPKMCGVTQNWESYEPIKKASQSNL. Residues 32 to 228 enclose the Peptidase M12B domain; that stretch reads RYIELVIVAD…QKPQCILNKP (197 aa). Residues glutamate 35 and aspartate 119 each contribute to the Ca(2+) site. 3 disulfides stabilise this stretch: cysteine 143–cysteine 223, cysteine 183–cysteine 207, and cysteine 185–cysteine 190. Zn(2+) is bound at residue histidine 168. The active site involves glutamate 169. Residues histidine 172 and histidine 178 each coordinate Zn(2+). Ca(2+) contacts are provided by cysteine 223 and asparagine 226. Positions 229–244 are excised as a propeptide; it reads LRTDTVSTPVSGNELL. One can recognise a Disintegrin domain in the interval 236–317; that stretch reads TPVSGNELLE…AGCPRNPFHA (82 aa). Disulfide bonds link cysteine 250/cysteine 259, cysteine 252/cysteine 260, cysteine 265/cysteine 279, cysteine 273/cysteine 303, cysteine 278/cysteine 282, and cysteine 291/cysteine 310. The short motif at 295–297 is the Cell attachment site element; the sequence is RGD.

This sequence belongs to the venom metalloproteinase (M12B) family. P-II subfamily. P-IIa sub-subfamily. In terms of assembly, monomer. It depends on Zn(2+) as a cofactor. In terms of tissue distribution, expressed by the venom gland.

It is found in the secreted. Functionally, metalloproteinase that impairs hemostasis in the envenomed animal. Inhibits GPIIb/GPIIIa (ITGA2B/ITGB3) binding to immobilized fibrinogen with an IC(50) of 2.2 nM and ADP-induced platelet aggregation with an IC(50) of 131 nM, respectively. Inhibits angiogenesis. By binding to vitronectin receptor (alpha-V/beta-3 (ITGAV/ITGB3)), also induces apoptosis of endothelial cells by blocking their attachment to extracellular matrix proteins. In terms of biological role, inhibits platelet aggregation induced by ADP (IC(50) is 30 nM), collagen (IC(50) is 500 nM), thrombin and epinephrin (IC(50) is 160 nM). This chain is Zinc metalloproteinase/disintegrin, found in Gloydius brevicauda (Korean slamosa snake).